Here is a 281-residue protein sequence, read N- to C-terminus: Bifunctional protein FolD (281 aa).

Residues 165–167 and S190 contribute to the NADP(+) site; that span reads GRS.

This sequence belongs to the tetrahydrofolate dehydrogenase/cyclohydrolase family. Homodimer.

It carries out the reaction (6R)-5,10-methylene-5,6,7,8-tetrahydrofolate + NADP(+) = (6R)-5,10-methenyltetrahydrofolate + NADPH. The enzyme catalyses (6R)-5,10-methenyltetrahydrofolate + H2O = (6R)-10-formyltetrahydrofolate + H(+). Its pathway is one-carbon metabolism; tetrahydrofolate interconversion. Catalyzes the oxidation of 5,10-methylenetetrahydrofolate to 5,10-methenyltetrahydrofolate and then the hydrolysis of 5,10-methenyltetrahydrofolate to 10-formyltetrahydrofolate. The protein is Bifunctional protein FolD of Polaromonas sp. (strain JS666 / ATCC BAA-500).